The following is a 233-amino-acid chain: Purine nucleoside phosphorylase DeoD-type (233 aa).

Histidine 4 is an a purine D-ribonucleoside binding site. Phosphate contacts are provided by residues glycine 20, arginine 24, arginine 43, and 87 to 90 (RVGS). Residues 178 to 180 (EME) and 202 to 203 (SD) contribute to the a purine D-ribonucleoside site. Aspartate 203 functions as the Proton donor in the catalytic mechanism.

Belongs to the PNP/UDP phosphorylase family. As to quaternary structure, homohexamer; trimer of homodimers.

It catalyses the reaction a purine D-ribonucleoside + phosphate = a purine nucleobase + alpha-D-ribose 1-phosphate. The catalysed reaction is a purine 2'-deoxy-D-ribonucleoside + phosphate = a purine nucleobase + 2-deoxy-alpha-D-ribose 1-phosphate. In terms of biological role, catalyzes the reversible phosphorolytic breakdown of the N-glycosidic bond in the beta-(deoxy)ribonucleoside molecules, with the formation of the corresponding free purine bases and pentose-1-phosphate. The polypeptide is Purine nucleoside phosphorylase DeoD-type (Bacillus subtilis (strain 168)).